A 441-amino-acid chain; its full sequence is Apolipoprotein N-acyltransferase (441 aa).

Transmembrane regions (helical) follow at residues 23-43, 45-65, 75-95, 97-117, 133-153, 156-176, and 178-198; these read IIFK…SIYL, FFEN…GLVL, YFWI…LSSI, FNLN…YGLL, GIFC…WGIF, YGFF…AYFI, and EGYI…FSGF. Residues 215 to 441 form the CN hydrolase domain; the sequence is INTNISQDQK…LSKEIFNDKK (227 aa). E256 (proton acceptor) is an active-site residue. Residue K310 is part of the active site. The active-site Nucleophile is C359.

Belongs to the CN hydrolase family. Apolipoprotein N-acyltransferase subfamily.

Its subcellular location is the cell inner membrane. It catalyses the reaction N-terminal S-1,2-diacyl-sn-glyceryl-L-cysteinyl-[lipoprotein] + a glycerophospholipid = N-acyl-S-1,2-diacyl-sn-glyceryl-L-cysteinyl-[lipoprotein] + a 2-acyl-sn-glycero-3-phospholipid + H(+). The protein operates within protein modification; lipoprotein biosynthesis (N-acyl transfer). Its function is as follows. Catalyzes the phospholipid dependent N-acylation of the N-terminal cysteine of apolipoprotein, the last step in lipoprotein maturation. The chain is Apolipoprotein N-acyltransferase from Campylobacter jejuni subsp. jejuni serotype O:2 (strain ATCC 700819 / NCTC 11168).